Here is a 145-residue protein sequence, read N- to C-terminus: D-aminoacyl-tRNA deacylase (145 aa).

The Gly-cisPro motif, important for rejection of L-amino acids signature appears at 137–138 (GP).

Belongs to the DTD family. As to quaternary structure, homodimer.

The protein resides in the cytoplasm. It catalyses the reaction glycyl-tRNA(Ala) + H2O = tRNA(Ala) + glycine + H(+). The enzyme catalyses a D-aminoacyl-tRNA + H2O = a tRNA + a D-alpha-amino acid + H(+). An aminoacyl-tRNA editing enzyme that deacylates mischarged D-aminoacyl-tRNAs. Also deacylates mischarged glycyl-tRNA(Ala), protecting cells against glycine mischarging by AlaRS. Acts via tRNA-based rather than protein-based catalysis; rejects L-amino acids rather than detecting D-amino acids in the active site. By recycling D-aminoacyl-tRNA to D-amino acids and free tRNA molecules, this enzyme counteracts the toxicity associated with the formation of D-aminoacyl-tRNA entities in vivo and helps enforce protein L-homochirality. This chain is D-aminoacyl-tRNA deacylase, found in Ruegeria pomeroyi (strain ATCC 700808 / DSM 15171 / DSS-3) (Silicibacter pomeroyi).